A 194-amino-acid chain; its full sequence is Small ribosomal subunit protein uS5 (194 aa).

One can recognise an S5 DRBM domain in the interval 26–89 (LEEKVVEIRR…ADAKKHLIRV (64 aa)).

The protein belongs to the universal ribosomal protein uS5 family. Part of the 30S ribosomal subunit. Contacts proteins S4 and S8.

Functionally, with S4 and S12 plays an important role in translational accuracy. In terms of biological role, located at the back of the 30S subunit body where it stabilizes the conformation of the head with respect to the body. This chain is Small ribosomal subunit protein uS5, found in Persephonella marina (strain DSM 14350 / EX-H1).